The following is a 241-amino-acid chain: Mitochondrial inner membrane protease ATP23 (241 aa).

His141 lines the a divalent metal cation pocket. Residue Glu142 is part of the active site. His145 contacts a divalent metal cation.

Belongs to the peptidase M76 family.

It is found in the mitochondrion inner membrane. Functionally, has a dual role in the assembly of mitochondrial ATPase. Acts as a protease that removes N-terminal residues of mitochondrial ATPase CF(0) subunit 6 at the intermembrane space side. Also involved in the correct assembly of the membrane-embedded ATPase CF(0) particle, probably mediating association of subunit 6 with the subunit 9 ring. The protein is Mitochondrial inner membrane protease ATP23 (ATP23) of Lodderomyces elongisporus (strain ATCC 11503 / CBS 2605 / JCM 1781 / NBRC 1676 / NRRL YB-4239) (Yeast).